Reading from the N-terminus, the 405-residue chain is MTKNSSTVFTHARIATLEEKAANLGLIEEAALVVKDARIVYAGPENKLPGEYASFEKIDCGNRLITPGLIDCHTHLVHAGNRAHEFELRLQGATYEEVARAGGGIVSSVRNLRAASEDDLVRETLPRLDALIAEGVTTVEVKSGYGLDRDSEIKSLKAARRLGEERDVAIRTTFLGAHALPPEMNGDKAAYIDRVINDMLPAIAEQGLADAVDGFCEGIAFLPDEIARVFDAAKAHDIPVKLHADQLSNLHGAALAASYGALSADHLEYTDGDGAAAMASAGTVAVLLPGAYYFIRETQKPPVEAFRAAGTKMALATDNNPGTSPLTSLLLTMNMGATLFRMTVEECIAGVTREAARALGILDQTGTLEIGKDADLAIWDIERPAELVYRIGFNPLWKRVFKGQI.

Residues histidine 73 and histidine 75 each coordinate Fe(3+). Residues histidine 73 and histidine 75 each coordinate Zn(2+). 4-imidazolone-5-propanoate-binding residues include arginine 82, tyrosine 145, and histidine 178. Tyrosine 145 lines the N-formimidoyl-L-glutamate pocket. Histidine 243 provides a ligand contact to Fe(3+). Histidine 243 contributes to the Zn(2+) binding site. Glutamine 246 contacts 4-imidazolone-5-propanoate. Residue aspartate 318 coordinates Fe(3+). Aspartate 318 lines the Zn(2+) pocket. The N-formimidoyl-L-glutamate site is built by asparagine 320 and glycine 322. Residue threonine 323 coordinates 4-imidazolone-5-propanoate.

This sequence belongs to the metallo-dependent hydrolases superfamily. HutI family. Requires Zn(2+) as cofactor. Fe(3+) serves as cofactor.

The protein localises to the cytoplasm. The enzyme catalyses 4-imidazolone-5-propanoate + H2O = N-formimidoyl-L-glutamate. It participates in amino-acid degradation; L-histidine degradation into L-glutamate; N-formimidoyl-L-glutamate from L-histidine: step 3/3. Functionally, catalyzes the hydrolytic cleavage of the carbon-nitrogen bond in imidazolone-5-propanoate to yield N-formimidoyl-L-glutamate. It is the third step in the universal histidine degradation pathway. This Brucella suis biovar 1 (strain 1330) protein is Imidazolonepropionase.